The primary structure comprises 314 residues: DNA-directed RNA polymerase subunit alpha (314 aa).

Residues 1-228 (MAQFQIECVE…NLFIPLKDLN (228 aa)) form an alpha N-terminal domain (alpha-NTD) region. Residues 243–314 (PESQIPIEEL…ITLPHEKAKA (72 aa)) form an alpha C-terminal domain (alpha-CTD) region.

It belongs to the RNA polymerase alpha chain family. As to quaternary structure, homodimer. In cyanobacteria the RNAP catalytic core is composed of 2 alpha, 1 beta, 1 beta', 1 gamma and 1 omega subunit. When a sigma factor is associated with the core the holoenzyme is formed, which can initiate transcription.

It carries out the reaction RNA(n) + a ribonucleoside 5'-triphosphate = RNA(n+1) + diphosphate. In terms of biological role, DNA-dependent RNA polymerase catalyzes the transcription of DNA into RNA using the four ribonucleoside triphosphates as substrates. The sequence is that of DNA-directed RNA polymerase subunit alpha from Synechocystis sp. (strain ATCC 27184 / PCC 6803 / Kazusa).